Here is a 117-residue protein sequence, read N- to C-terminus: MQTIEIGNKAELQACKFLHTQELEILAHNFKALPYGEIDIIALDKDTLVFIEVKYRSKTKFAQAEEMLTYSKQQKLVNSASIYLQHNPQYQDYQCRFDLIAINESNINWIKNAFGVI.

The protein belongs to the UPF0102 family.

This chain is UPF0102 protein FTN_0424, found in Francisella tularensis subsp. novicida (strain U112).